The sequence spans 317 residues: Apolipoprotein E (317 aa).

The signal sequence occupies residues 1 to 18 (MKVLWAALLVTFLAGCQA). 2 O-linked (GalNAc...) threonine glycosylation sites follow: Thr26 and Thr36. 8 tandem repeats follow at residues 80-101 (ALMD…EQLT), 102-123 (PVAE…ARLG), 124-145 (ADME…AMLG), 146-167 (QSTE…KRLL), 168-189 (RDAD…EGAE), 190-211 (RGLS…VRAA), 212-233 (TVGS…ERLR), and 234-255 (ARME…EQVA). The 8 X 22 AA approximate tandem repeats stretch occupies residues 80 to 255 (ALMDETMKEL…RLDEVKEQVA (176 aa)). Residue Lys93 is glycosylated (N-linked (Glc) (glycation) lysine). Met143 carries the methionine sulfoxide modification. Ser147 carries the phosphoserine; by FAM20C modification. The LDL and other lipoprotein receptors binding stretch occupies residues 158–168 (HLRKLRKRLLR). Residue 162 to 165 (LRKR) participates in heparin binding. Positions 210-290 (AATVGSLAGQ…SWFEPLVEDM (81 aa)) are lipid-binding and lipoprotein association. A glycan (O-linked (GalNAc...) threonine) is linked at Thr212. Residue 229–236 (GERLRARM) coordinates heparin. The segment at 266–317 (QQIRLQAEAFQARLKSWFEPLVEDMQRQWAGLVEKVQAAVGTSAAPVPSDNH) is homooligomerization. Positions 278–290 (RLKSWFEPLVEDM) are specificity for association with VLDL. Thr307 carries an O-linked (GalNAc...) threonine glycan. Residues Ser308 and Ser314 are each glycosylated (O-linked (GalNAc...) serine).

This sequence belongs to the apolipoprotein A1/A4/E family. In terms of assembly, homotetramer. May interact with ABCA1; functionally associated with ABCA1 in the biogenesis of HDLs. May interact with APP/A4 amyloid-beta peptide; the interaction is extremely stable in vitro but its physiological significance is unclear. May interact with MAPT. May interact with MAP2. In the cerebrospinal fluid, interacts with secreted SORL1. Interacts with PMEL; this allows the loading of PMEL luminal fragment on ILVs to induce fibril nucleation. As to quaternary structure, (Microbial infection) Interacts with hepatitis C virus (HCV) envelope glycoprotein E2; this interaction is required for HCV infectivity and production. APOE exists as multiple glycosylated and sialylated glycoforms within cells and in plasma. The extent of glycosylation and sialylation are tissue and context specific. Plasma APOE undergoes desialylation and is less glycosylated and sialylated than the cellular form. Glycosylation is not required for proper expression and secretion. O-glycosylated with core 1 or possibly core 8 glycans. Thr-307 and Ser-314 are minor glycosylation sites compared to Ser-308. In terms of processing, glycated in plasma VLDL of normal subjects, and of hyperglycemic diabetic patients at a higher level (2-3 fold). Post-translationally, phosphorylated by FAM20C in the extracellular medium. Undergoes C-terminal proteolytic processing in neurons. C-terminally truncated APOE has a tendency to form neurotoxic intracellular neurofibrillary tangle-like inclusions in neurons. Produced by several tissues and cell types and mainly found associated with lipid particles in the plasma, the interstitial fluid and lymph. Mainly synthesized by liver hepatocytes. Significant quantities are also produced in brain, mainly by astrocytes and glial cells in the cerebral cortex, but also by neurons in frontal cortex and hippocampus. It is also expressed by cells of the peripheral nervous system. Also expressed by adrenal gland, testis, ovary, skin, kidney, spleen and adipose tissue and macrophages in various tissues.

The protein resides in the secreted. Its subcellular location is the extracellular space. It is found in the extracellular matrix. The protein localises to the extracellular vesicle. It localises to the endosome. The protein resides in the multivesicular body. APOE is an apolipoprotein, a protein associating with lipid particles, that mainly functions in lipoprotein-mediated lipid transport between organs via the plasma and interstitial fluids. APOE is a core component of plasma lipoproteins and is involved in their production, conversion and clearance. Apolipoproteins are amphipathic molecules that interact both with lipids of the lipoprotein particle core and the aqueous environment of the plasma. As such, APOE associates with chylomicrons, chylomicron remnants, very low density lipoproteins (VLDL) and intermediate density lipoproteins (IDL) but shows a preferential binding to high-density lipoproteins (HDL). It also binds a wide range of cellular receptors including the LDL receptor/LDLR, the LDL receptor-related proteins LRP1, LRP2 and LRP8 and the very low-density lipoprotein receptor/VLDLR that mediate the cellular uptake of the APOE-containing lipoprotein particles. Finally, APOE also has a heparin-binding activity and binds heparan-sulfate proteoglycans on the surface of cells, a property that supports the capture and the receptor-mediated uptake of APOE-containing lipoproteins by cells. A main function of APOE is to mediate lipoprotein clearance through the uptake of chylomicrons, VLDLs, and HDLs by hepatocytes. APOE is also involved in the biosynthesis by the liver of VLDLs as well as their uptake by peripheral tissues ensuring the delivery of triglycerides and energy storage in muscle, heart and adipose tissues. By participating in the lipoprotein-mediated distribution of lipids among tissues, APOE plays a critical role in plasma and tissues lipid homeostasis. APOE is also involved in two steps of reverse cholesterol transport, the HDLs-mediated transport of cholesterol from peripheral tissues to the liver, and thereby plays an important role in cholesterol homeostasis. First, it is functionally associated with ABCA1 in the biogenesis of HDLs in tissues. Second, it is enriched in circulating HDLs and mediates their uptake by hepatocytes. APOE also plays an important role in lipid transport in the central nervous system, regulating neuron survival and sprouting. APOE is also involved in innate and adaptive immune responses, controlling for instance the survival of myeloid-derived suppressor cells. Binds to the immune cell receptor LILRB4. APOE may also play a role in transcription regulation through a receptor-dependent and cholesterol-independent mechanism, that activates MAP3K12 and a non-canonical MAPK signal transduction pathway that results in enhanced AP-1-mediated transcription of APP. In terms of biological role, (Microbial infection) Through its interaction with HCV envelope glycoprotein E2, participates in the attachment of HCV to HSPGs and other receptors (LDLr, VLDLr, and SR-B1) on the cell surface and to the assembly, maturation and infectivity of HCV viral particles. This interaction is probably promoted via the up-regulation of cellular autophagy by the virus. This Homo sapiens (Human) protein is Apolipoprotein E.